A 605-amino-acid chain; its full sequence is Dolichyl-diphosphooligosaccharide--protein glycosyltransferase subunit 1 (605 aa).

A signal peptide spans M1–A22. Topologically, residues S23 to P437 are lumenal. N6-acetyllysine is present on K185. Residue N297 is glycosylated (N-linked (GlcNAc...) asparagine). The helical transmembrane segment at L438–V455 threads the bilayer. Topologically, residues R456–L605 are cytoplasmic. K536 carries the post-translational modification N6-acetyllysine; alternate. K536 participates in a covalent cross-link: Glycyl lysine isopeptide (Lys-Gly) (interchain with G-Cter in SUMO2); alternate.

The protein belongs to the OST1 family. As to quaternary structure, component of the oligosaccharyltransferase (OST) complex. OST exists in two different complex forms which contain common core subunits RPN1, RPN2, OST48, OST4, DAD1 and TMEM258, either STT3A or STT3B as catalytic subunits, and form-specific accessory subunits. STT3A complex assembly occurs through the formation of 3 subcomplexes. Subcomplex 1 contains RPN1 and TMEM258, subcomplex 2 contains the STT3A-specific subunits STT3A, DC2/OSTC, and KCP2 as well as the core subunit OST4, and subcomplex 3 contains RPN2, DAD1, and OST48. The STT3A complex can form stable complexes with the Sec61 complex or with both the Sec61 and TRAP complexes. Interacts with TMEM35A/NACHO. Ubiquitinated by the ECS(ASB11) complex. Post-translationally, ufmylated by UFL1 in response to endoplasmic reticulum stress, promoting reticulophagy of endoplasmic reticulum sheets. Expressed in all tissues tested.

The protein resides in the endoplasmic reticulum membrane. The protein operates within protein modification; protein glycosylation. Its function is as follows. Subunit of the oligosaccharyl transferase (OST) complex that catalyzes the initial transfer of a defined glycan (Glc(3)Man(9)GlcNAc(2) in eukaryotes) from the lipid carrier dolichol-pyrophosphate to an asparagine residue within an Asn-X-Ser/Thr consensus motif in nascent polypeptide chains, the first step in protein N-glycosylation. N-glycosylation occurs cotranslationally and the complex associates with the Sec61 complex at the channel-forming translocon complex that mediates protein translocation across the endoplasmic reticulum (ER). All subunits are required for a maximal enzyme activity. The sequence is that of Dolichyl-diphosphooligosaccharide--protein glycosyltransferase subunit 1 from Rattus norvegicus (Rat).